We begin with the raw amino-acid sequence, 253 residues long: 3-deoxy-manno-octulosonate cytidylyltransferase (253 aa).

The protein belongs to the KdsB family.

It localises to the cytoplasm. It carries out the reaction 3-deoxy-alpha-D-manno-oct-2-ulosonate + CTP = CMP-3-deoxy-beta-D-manno-octulosonate + diphosphate. It participates in nucleotide-sugar biosynthesis; CMP-3-deoxy-D-manno-octulosonate biosynthesis; CMP-3-deoxy-D-manno-octulosonate from 3-deoxy-D-manno-octulosonate and CTP: step 1/1. Its pathway is bacterial outer membrane biogenesis; lipopolysaccharide biosynthesis. Functionally, activates KDO (a required 8-carbon sugar) for incorporation into bacterial lipopolysaccharide in Gram-negative bacteria. In Neisseria meningitidis serogroup B (strain ATCC BAA-335 / MC58), this protein is 3-deoxy-manno-octulosonate cytidylyltransferase.